The following is a 127-amino-acid chain: Small ribosomal subunit protein uS12m (127 aa).

This sequence belongs to the universal ribosomal protein uS12 family.

The protein resides in the mitochondrion. Functionally, protein S12 is involved in the translation initiation step. This chain is Small ribosomal subunit protein uS12m (RPS12), found in Chondrus crispus (Carrageen Irish moss).